A 135-amino-acid polypeptide reads, in one-letter code: Fluoride-specific ion channel FluC (135 aa).

The next 4 membrane-spanning stretches (helical) occupy residues 12–32, 42–62, 70–90, and 106–126; these read FLVI…LGLS, LGTL…VGIF, LAWK…FSTF, and AIGL…LGLL. 2 residues coordinate Na(+): Gly82 and Thr85.

The protein belongs to the fluoride channel Fluc/FEX (TC 1.A.43) family.

The protein resides in the cell inner membrane. It catalyses the reaction fluoride(in) = fluoride(out). Its activity is regulated as follows. Na(+) is not transported, but it plays an essential structural role and its presence is essential for fluoride channel function. Fluoride-specific ion channel. Important for reducing fluoride concentration in the cell, thus reducing its toxicity. The polypeptide is Fluoride-specific ion channel FluC (Dechloromonas aromatica (strain RCB)).